Here is a 331-residue protein sequence, read N- to C-terminus: MKISVIGGGSWGTTLAQVLTDNGHETLIYDVNPEAVKKINNNIHPFFDNKITGIRATLDLKESIDYADYILLAVPTKFMRDSLRDINKLATRKLYFINVSKGIEPVTLKRVSEIVTDEITPELLGAYAVLTGPSHAEEVIERKLTVLTAASDVEWFRKSVQQLFSNQSYLRVYTSDDLIGCEVGGAIKNAIAIVSGMMTGYGLGENARAALITRGILEIVRVVVHYGGKKETAFGLTGIGDLIVTASSYNSRNFNAGLKIGQGTPVEQVLSESKMVVEGVRAIQAAKDLCVQTGIELPIIEITYEVIFNNMSVKEAIQNLLTRELKEEVIA.

NADPH is bound by residues serine 10, tryptophan 11, and lysine 101. Positions 101, 132, and 134 each coordinate sn-glycerol 3-phosphate. NADPH is bound at residue alanine 136. Sn-glycerol 3-phosphate-binding residues include lysine 188, aspartate 241, serine 251, arginine 252, and asparagine 253. The active-site Proton acceptor is lysine 188. Arginine 252 is an NADPH binding site. 2 residues coordinate NADPH: valine 276 and glutamate 278.

Belongs to the NAD-dependent glycerol-3-phosphate dehydrogenase family.

It is found in the cytoplasm. It catalyses the reaction sn-glycerol 3-phosphate + NAD(+) = dihydroxyacetone phosphate + NADH + H(+). The catalysed reaction is sn-glycerol 3-phosphate + NADP(+) = dihydroxyacetone phosphate + NADPH + H(+). Its pathway is membrane lipid metabolism; glycerophospholipid metabolism. In terms of biological role, catalyzes the reduction of the glycolytic intermediate dihydroxyacetone phosphate (DHAP) to sn-glycerol 3-phosphate (G3P), the key precursor for phospholipid synthesis. The sequence is that of Glycerol-3-phosphate dehydrogenase [NAD(P)+] from Acholeplasma laidlawii (strain PG-8A).